The sequence spans 540 residues: Chaperonin GroEL (540 aa).

ATP contacts are provided by residues 29-32 (TLGP), 86-90 (DGTTT), Gly-413, and Asp-493. The interval 520 to 540 (AEKPEPKPAPGPADPGAGMDF) is disordered.

This sequence belongs to the chaperonin (HSP60) family. Forms a cylinder of 14 subunits composed of two heptameric rings stacked back-to-back. Interacts with the co-chaperonin GroES.

Its subcellular location is the cytoplasm. It catalyses the reaction ATP + H2O + a folded polypeptide = ADP + phosphate + an unfolded polypeptide.. Functionally, together with its co-chaperonin GroES, plays an essential role in assisting protein folding. The GroEL-GroES system forms a nano-cage that allows encapsulation of the non-native substrate proteins and provides a physical environment optimized to promote and accelerate protein folding. The polypeptide is Chaperonin GroEL (Tropheryma whipplei (strain TW08/27) (Whipple's bacillus)).